Consider the following 601-residue polypeptide: Ribosomal oxygenase 1 (601 aa).

Residues 1-11 (MAACGAEERQR) are compositionally biased toward basic and acidic residues. A disordered region spans residues 1-149 (MAACGAEERQ…PGGGGVPGLL (149 aa)). A compositionally biased stretch (low complexity) spans 61–70 (ERAAPPQGAA). Positions 73 to 87 (DRVERAGSSEAKQGD) are enriched in basic and acidic residues. Positions 254–399 (CSLRLLSPQA…DFLEKLLPAA (146 aa)) constitute a JmjC domain. His-300, Asp-302, and His-365 together coordinate Fe cation.

It belongs to the ROX family. NO66 subfamily. Fe(2+) serves as cofactor.

It localises to the nucleus. The protein localises to the nucleolus. Its subcellular location is the nucleoplasm. The catalysed reaction is N(6),N(6)-dimethyl-L-lysyl(36)-[histone H3] + 2 2-oxoglutarate + 2 O2 = L-lysyl(36)-[histone H3] + 2 formaldehyde + 2 succinate + 2 CO2. The enzyme catalyses N(6)-methyl-L-lysyl-[protein] + 2-oxoglutarate + O2 = L-lysyl-[protein] + formaldehyde + succinate + CO2. It catalyses the reaction L-histidyl-[protein] + 2-oxoglutarate + O2 = (3S)-3-hydroxy-L-histidyl-[protein] + succinate + CO2. Functionally, oxygenase that can act as both a histone lysine demethylase and a ribosomal histidine hydroxylase. Specifically demethylates 'Lys-4' (H3K4me) and 'Lys-36' (H3K36me) of histone H3, thereby playing a central role in histone code. Preferentially demethylates trimethylated H3 'Lys-4' (H3K4me3) and monomethylated H3 'Lys-4' (H3K4me1) residues, while it has weaker activity for dimethylated H3 'Lys-36' (H3K36me2). Also catalyzes demethylation of non-histone proteins. Also catalyzes the hydroxylation of 60S ribosomal protein L8 on 'His-216', thereby playing a role in ribosome biogenesis. This is Ribosomal oxygenase 1 (RIOX1) from Gallus gallus (Chicken).